A 403-amino-acid polypeptide reads, in one-letter code: Casein kinase II subunit alpha-2 (403 aa).

An N-terminal signal peptide occupies residues 1-31 (MHLIFFFSYFLRRYLLLLCAILILRAPLAHS). Positions 104-389 (YEVVRKVGRG…AKEAMAHPYF (286 aa)) constitute a Protein kinase domain. ATP is bound by residues 110–118 (VGRGKYSEV) and Lys-133. N-linked (GlcNAc...) asparagine glycosylation is present at Asn-182. The active-site Proton acceptor is the Asp-221.

The protein belongs to the protein kinase superfamily. Ser/Thr protein kinase family. CK2 subfamily. In terms of assembly, heterotetramer of two catalytic alpha subunits and two regulatory beta subunits. Seems to be present in all plant organs. But seems to be more expressed than CKA1.

The protein resides in the nucleus. It localises to the nucleolus. It catalyses the reaction L-seryl-[protein] + ATP = O-phospho-L-seryl-[protein] + ADP + H(+). It carries out the reaction L-threonyl-[protein] + ATP = O-phospho-L-threonyl-[protein] + ADP + H(+). In terms of biological role, casein kinases are operationally defined by their preferential utilization of acidic proteins such as caseins as substrates. The alpha chain contains the catalytic site. The tetrameric holoenzyme CK2, composed of two alpha and two beta subunits, phosphorylates the transcription factor PIF1 after an exposure to light, resulting in a proteasome-dependent degradation of PIF1 and promotion of photomorphogenesis. CK2 phosphorylates translation initiation factors. May participate in the regulation of the initiation of translation. Acts as circadian clock component that maintains the correct period length through phosphorylation of CCA1. May act as an ectokinase that phosphorylates several extracellular proteins. The polypeptide is Casein kinase II subunit alpha-2 (Arabidopsis thaliana (Mouse-ear cress)).